Consider the following 128-residue polypeptide: Cytochrome c-type biogenesis protein CcmE (128 aa).

Residues Met-1–Arg-8 are Cytoplasmic-facing. A helical; Signal-anchor for type II membrane protein transmembrane segment spans residues Leu-9–Asn-29. The Periplasmic portion of the chain corresponds to Leu-30–Ser-128. Heme contacts are provided by His-120 and Tyr-124.

The protein belongs to the CcmE/CycJ family.

It localises to the cell inner membrane. Heme chaperone required for the biogenesis of c-type cytochromes. Transiently binds heme delivered by CcmC and transfers the heme to apo-cytochromes in a process facilitated by CcmF and CcmH. This is Cytochrome c-type biogenesis protein CcmE from Rickettsia typhi (strain ATCC VR-144 / Wilmington).